A 283-amino-acid chain; its full sequence is Pantothenate synthetase (283 aa).

30–37 (MGALHEGH) lines the ATP pocket. H37 serves as the catalytic Proton donor. Q61 is a binding site for (R)-pantoate. Residue Q61 participates in beta-alanine binding. 150 to 153 (GRKD) contributes to the ATP binding site. Q156 serves as a coordination point for (R)-pantoate. ATP-binding positions include V179 and 187–190 (MSSR).

It belongs to the pantothenate synthetase family. As to quaternary structure, homodimer.

The protein resides in the cytoplasm. The enzyme catalyses (R)-pantoate + beta-alanine + ATP = (R)-pantothenate + AMP + diphosphate + H(+). It functions in the pathway cofactor biosynthesis; (R)-pantothenate biosynthesis; (R)-pantothenate from (R)-pantoate and beta-alanine: step 1/1. Functionally, catalyzes the condensation of pantoate with beta-alanine in an ATP-dependent reaction via a pantoyl-adenylate intermediate. The chain is Pantothenate synthetase from Rhodopirellula baltica (strain DSM 10527 / NCIMB 13988 / SH1).